The chain runs to 706 residues: Kinesin-like protein KIP2 (706 aa).

2 stretches are compositionally biased toward low complexity: residues 1 to 28 and 36 to 63; these read MIQK…QSPS and SNLT…RSNS. Positions 1 to 139 are disordered; that stretch reads MIQKMSPSLR…QPRSNSHHGS (139 aa). In terms of domain architecture, Kinesin motor spans 102–493; sequence SITVTIRPKP…LRFASRAKNV (392 aa). The segment covering 127 to 139 has biased composition (polar residues); the sequence is RYSQPRSNSHHGS. 202 to 209 lines the ATP pocket; sequence GMTGSGKT. A disordered region spans residues 413-445; that stretch reads VGSNIPSPSASGSSSSSGNATNNGTSPSNHIPY. Residues 414-441 are compositionally biased toward low complexity; that stretch reads GSNIPSPSASGSSSSSGNATNNGTSPSN. 3 coiled-coil regions span residues 507 to 541, 569 to 589, and 612 to 689; these read NNDG…NIGE, MRAE…LLDK, and TLLE…RALK.

Belongs to the TRAFAC class myosin-kinesin ATPase superfamily. Kinesin family. Might be dimeric.

It localises to the cytoplasm. The protein localises to the cytoskeleton. In terms of biological role, required for assembly of the mitotic spindle. The polypeptide is Kinesin-like protein KIP2 (KIP2) (Saccharomyces cerevisiae (strain ATCC 204508 / S288c) (Baker's yeast)).